The following is a 256-amino-acid chain: Thiazole synthase (256 aa).

Lys96 functions as the Schiff-base intermediate with DXP in the catalytic mechanism. Residues Gly157, 184 to 185 (AG), and 206 to 207 (NT) contribute to the 1-deoxy-D-xylulose 5-phosphate site.

The protein belongs to the ThiG family. In terms of assembly, homotetramer. Forms heterodimers with either ThiH or ThiS.

The protein resides in the cytoplasm. The catalysed reaction is [ThiS sulfur-carrier protein]-C-terminal-Gly-aminoethanethioate + 2-iminoacetate + 1-deoxy-D-xylulose 5-phosphate = [ThiS sulfur-carrier protein]-C-terminal Gly-Gly + 2-[(2R,5Z)-2-carboxy-4-methylthiazol-5(2H)-ylidene]ethyl phosphate + 2 H2O + H(+). Its pathway is cofactor biosynthesis; thiamine diphosphate biosynthesis. Its function is as follows. Catalyzes the rearrangement of 1-deoxy-D-xylulose 5-phosphate (DXP) to produce the thiazole phosphate moiety of thiamine. Sulfur is provided by the thiocarboxylate moiety of the carrier protein ThiS. In vitro, sulfur can be provided by H(2)S. The sequence is that of Thiazole synthase from Brucella melitensis biotype 2 (strain ATCC 23457).